The primary structure comprises 382 residues: Cell division protein FtsZ (382 aa).

Residues 21-25, 108-110, E139, R143, and D187 contribute to the GTP site; these read GGGNN and GTG. The tract at residues 320 to 382 is disordered; sequence KDVTKPQRPS…TFLRNRNKRG (63 aa). Residues 326–341 are compositionally biased toward polar residues; sequence QRPSLNQSIKTHNQSV. Over residues 342–351 the composition is skewed to basic and acidic residues; the sequence is PKREPKREEP. Polar residues predominate over residues 352–365; it reads QQQNTVSRHTSQPA.

This sequence belongs to the FtsZ family. In terms of assembly, homodimer. Polymerizes to form a dynamic ring structure in a strictly GTP-dependent manner. Interacts directly with several other division proteins. Interacts with FtsA. Interacts with Phi29 DNA replication protein 1. Interacts with the cell division inhibitor MciZ.

Its subcellular location is the cytoplasm. Its activity is regulated as follows. During sporulation, is negatively regulated by MciZ, which binds to FtsZ and inhibits its polymerization and the formation of the Z ring. Its function is as follows. Essential cell division protein that forms a contractile ring structure (Z ring) at the future cell division site. The regulation of the ring assembly controls the timing and the location of cell division. One of the functions of the FtsZ ring is to recruit other cell division proteins to the septum to produce a new cell wall between the dividing cells. Binds GTP and shows GTPase activity. This chain is Cell division protein FtsZ, found in Bacillus subtilis (strain 168).